Consider the following 292-residue polypeptide: Tumor necrosis factor receptor type 1-associated DEATH domain protein (292 aa).

The Nuclear export signal motif lies at 148 to 164 (LRDDEIAELDQQLQSQA). Residues 199 to 289 (AAGDLQRFSN…SLAENILDIQ (91 aa)) enclose the Death domain. Residues 215–228 (RKVGRALGKNCRAL) carry the Nuclear localization signal motif.

As to quaternary structure, heterodimer with tnfrsf1a.

Its subcellular location is the nucleus. The protein localises to the cytoplasm. It is found in the cytoskeleton. Adapter molecule for tnfrsf1a that specifically associates with the cytoplasmic domain of activated tnfrsf1a mediating its interaction with fadd. The protein is Tumor necrosis factor receptor type 1-associated DEATH domain protein (tradd) of Oncorhynchus mykiss (Rainbow trout).